The sequence spans 462 residues: Putative zinc metalloprotease RSc1411 (462 aa).

The chain crosses the membrane as a helical span at residues 1-21 (MLTVLAFVFAIAVLIVVHELG). His-18 is a binding site for Zn(2+). Residue Glu-19 is part of the active site. His-22 is a binding site for Zn(2+). The chain crosses the membrane as a helical span at residues 102-124 (FAIVAAGPVFNFLLAIALYALLA). The PDZ domain maps to 201 to 283 (TVRLRELPSA…MPEQNASIDI (83 aa)). 2 helical membrane passes run 386 to 406 (FVAFLALISVSLGVLNLLPVP) and 430 to 450 (WQAVLQKIGIACILLLTSLAL).

It belongs to the peptidase M50B family. It depends on Zn(2+) as a cofactor.

It localises to the cell inner membrane. In Ralstonia nicotianae (strain ATCC BAA-1114 / GMI1000) (Ralstonia solanacearum), this protein is Putative zinc metalloprotease RSc1411.